The primary structure comprises 156 residues: Small ribosomal subunit protein uS7 (156 aa).

It belongs to the universal ribosomal protein uS7 family. As to quaternary structure, part of the 30S ribosomal subunit. Contacts proteins S9 and S11.

Functionally, one of the primary rRNA binding proteins, it binds directly to 16S rRNA where it nucleates assembly of the head domain of the 30S subunit. Is located at the subunit interface close to the decoding center, probably blocks exit of the E-site tRNA. This Edwardsiella ictaluri (strain 93-146) protein is Small ribosomal subunit protein uS7.